The primary structure comprises 333 residues: Casein kinase II subunit alpha-3 (333 aa).

The Protein kinase domain maps to 34–319 (YEVVRKVGRG…AREAMDHPYF (286 aa)). ATP contacts are provided by residues 40 to 48 (VGRGKYSEV) and Lys63. Asp151 serves as the catalytic Proton acceptor.

This sequence belongs to the protein kinase superfamily. Ser/Thr protein kinase family. CK2 subfamily. In terms of assembly, heterotetramer of two catalytic alpha subunits and two regulatory beta subunits.

It localises to the nucleus. Its subcellular location is the nucleolus. The protein localises to the cytoplasm. It catalyses the reaction L-seryl-[protein] + ATP = O-phospho-L-seryl-[protein] + ADP + H(+). It carries out the reaction L-threonyl-[protein] + ATP = O-phospho-L-threonyl-[protein] + ADP + H(+). In terms of biological role, casein kinases are operationally defined by their preferential utilization of acidic proteins such as caseins as substrates. The alpha chain contains the catalytic site. The tetrameric holoenzyme CK2 is composed of two alpha and two beta subunits. Acts as a circadian clock component that maintains the correct period length through phosphorylation of CCA1. The chain is Casein kinase II subunit alpha-3 from Arabidopsis thaliana (Mouse-ear cress).